A 185-amino-acid polypeptide reads, in one-letter code: MISTNDFRTGLTIELEGEVYQVIEFQHVKPGKGAAFVRSKLRNMRTGAVIEKTFNAGEKIPRARIERREMQYLYSDGKEYNFMDMETYDQVTMSAAQLGDAVKYLKENMNIQVLLFQGKSIGVELPNFVELEVIDTTPGIKGDTASGGSKPATLETGAVVQVPFFVNVGDKLQIDTRTGNYIKRV.

It belongs to the elongation factor P family.

The protein resides in the cytoplasm. The protein operates within protein biosynthesis; polypeptide chain elongation. Functionally, involved in peptide bond synthesis. Stimulates efficient translation and peptide-bond synthesis on native or reconstituted 70S ribosomes in vitro. Probably functions indirectly by altering the affinity of the ribosome for aminoacyl-tRNA, thus increasing their reactivity as acceptors for peptidyl transferase. The sequence is that of Elongation factor P from Pelotomaculum thermopropionicum (strain DSM 13744 / JCM 10971 / SI).